A 1099-amino-acid polypeptide reads, in one-letter code: Mediator of RNA polymerase II transcription subunit 5 (1099 aa).

Residues 41–66 (DNDDAKTQEGSGSQDKTDVEESISKP) form a disordered region.

This sequence belongs to the Mediator complex subunit 5 family. Component of the Mediator complex.

It localises to the nucleus. Its function is as follows. Component of the Mediator complex, a coactivator involved in the regulated transcription of nearly all RNA polymerase II-dependent genes. Mediator functions as a bridge to convey information from gene-specific regulatory proteins to the basal RNA polymerase II transcription machinery. Mediator is recruited to promoters by direct interactions with regulatory proteins and serves as a scaffold for the assembly of a functional preinitiation complex with RNA polymerase II and the general transcription factors. The polypeptide is Mediator of RNA polymerase II transcription subunit 5 (NUT1) (Candida glabrata (strain ATCC 2001 / BCRC 20586 / JCM 3761 / NBRC 0622 / NRRL Y-65 / CBS 138) (Yeast)).